The following is a 166-amino-acid chain: MKVVQGDYRGEGLKIAVVVPRFNDLVTSKLLEGALDGLKRHGVSDENITVVRIPGSMEAIYTLKRLLDLGVHDAIIVLGAVIRGETYHFNVVANEIGKAVAQFNMNSDVPIVFGVLTTDTLEQALNRAGAKSGNKGFEAAMVAIEMANLRKKLRRDFLEPHSNSRQ.

5-amino-6-(D-ribitylamino)uracil-binding positions include F22, S56–E58, and A80–I82. Residue E85–T86 coordinates (2S)-2-hydroxy-3-oxobutyl phosphate. H88 serves as the catalytic Proton donor. Position 113 (F113) interacts with 5-amino-6-(D-ribitylamino)uracil. Residue R127 coordinates (2S)-2-hydroxy-3-oxobutyl phosphate.

It belongs to the DMRL synthase family.

It catalyses the reaction (2S)-2-hydroxy-3-oxobutyl phosphate + 5-amino-6-(D-ribitylamino)uracil = 6,7-dimethyl-8-(1-D-ribityl)lumazine + phosphate + 2 H2O + H(+). The protein operates within cofactor biosynthesis; riboflavin biosynthesis; riboflavin from 2-hydroxy-3-oxobutyl phosphate and 5-amino-6-(D-ribitylamino)uracil: step 1/2. Functionally, catalyzes the formation of 6,7-dimethyl-8-ribityllumazine by condensation of 5-amino-6-(D-ribitylamino)uracil with 3,4-dihydroxy-2-butanone 4-phosphate. This is the penultimate step in the biosynthesis of riboflavin. The protein is 6,7-dimethyl-8-ribityllumazine synthase of Thermotoga neapolitana (strain ATCC 49049 / DSM 4359 / NBRC 107923 / NS-E).